The primary structure comprises 319 residues: tRNA dimethylallyltransferase (319 aa).

16 to 23 (GPTASGKS) is an ATP binding site. 18–23 (TASGKS) serves as a coordination point for substrate. Positions 46-49 (DSMV) are interaction with substrate tRNA.

It belongs to the IPP transferase family. As to quaternary structure, monomer. The cofactor is Mg(2+).

The enzyme catalyses adenosine(37) in tRNA + dimethylallyl diphosphate = N(6)-dimethylallyladenosine(37) in tRNA + diphosphate. Functionally, catalyzes the transfer of a dimethylallyl group onto the adenine at position 37 in tRNAs that read codons beginning with uridine, leading to the formation of N6-(dimethylallyl)adenosine (i(6)A). This Cutibacterium acnes (strain DSM 16379 / KPA171202) (Propionibacterium acnes) protein is tRNA dimethylallyltransferase.